Consider the following 160-residue polypeptide: Ureidoglycolate lyase (160 aa).

The protein belongs to the ureidoglycolate lyase family. As to quaternary structure, homodimer. It depends on Ni(2+) as a cofactor.

It catalyses the reaction (S)-ureidoglycolate = urea + glyoxylate. It participates in nitrogen metabolism; (S)-allantoin degradation. Catalyzes the catabolism of the allantoin degradation intermediate (S)-ureidoglycolate, generating urea and glyoxylate. Involved in the utilization of allantoin as nitrogen source. This Salmonella enteritidis protein is Ureidoglycolate lyase.